The chain runs to 782 residues: Glucocorticoid receptor (782 aa).

Residues 1–20 (MDPKESLTPPSREEIPSSVL) are disordered. The tract at residues 1 to 425 (MDPKESLTPP…SAATGPPPKL (425 aa)) is modulating. Position 8 is a phosphothreonine (Thr-8). Arg-24 bears the Omega-N-methylarginine mark. Ser-46 bears the Phosphoserine mark. Positions 48–79 (SLAAVSQPDSKQQRLAVDFPKGSGSNAQQPDL) are disordered. Ser-114, Ser-135, Ser-142, Ser-208, Ser-216, and Ser-231 each carry phosphoserine. The tract at residues 130–184 (LSRSTSVPENPKSSASAAGPAAPAEKAFPKTHSDGAPEQPNVKGQTGTNGGNVKL) is disordered. The span at 140–155 (PKSSASAAGPAAPAEK) shows a compositional bias: low complexity. Residue Lys-263 forms a Glycyl lysine isopeptide (Lys-Gly) (interchain with G-Cter in SUMO2) linkage. Ser-272 bears the Phosphoserine mark. Glycyl lysine isopeptide (Lys-Gly) (interchain with G-Cter in SUMO); alternate cross-links involve residues Lys-282 and Lys-298. Glycyl lysine isopeptide (Lys-Gly) (interchain with G-Cter in SUMO2); alternate cross-links involve residues Lys-282 and Lys-298. A phosphoserine mark is found at Ser-312 and Ser-410. A Glycyl lysine isopeptide (Lys-Gly) (interchain with G-Cter in ubiquitin) cross-link involves residue Lys-424. 2 NR C4-type zinc fingers span residues 426-446 (CLVCSDEASGCHYGVLTCGSC) and 462-486 (CAGRNDCIIDKIRRKNCPACRYRKC). Residues 426-491 (CLVCSDEASG…RYRKCLQAGM (66 aa)) constitute a DNA-binding region (nuclear receptor). 4 positions are modified to N6-acetyllysine: Lys-485, Lys-497, Lys-499, and Lys-500. Residues 490–782 (GMNLEARKTK…NIKKLLFHQK (293 aa)) are interaction with CLOCK. Positions 492-528 (NLEARKTKKKIKGIQQATTGVSQETSENSANKTIVPA) are hinge. Residues 529–763 (TLPQLTPTLV…FPEMLAEIIT (235 aa)) form the NR LBD domain. Residues 537-702 (LVSLLEVIEP…EIRMTYIKEL (166 aa)) are interaction with CRY1. Lys-708 is covalently cross-linked (Glycyl lysine isopeptide (Lys-Gly) (interchain with G-Cter in SUMO)).

This sequence belongs to the nuclear hormone receptor family. NR3 subfamily. In terms of assembly, heteromultimeric cytoplasmic complex with HSP90AA1, HSPA1A/HSPA1B, and FKBP5 or another immunophilin such as PPID, STIP1, or the immunophilin homolog PPP5C. Upon ligand binding FKBP5 dissociates from the complex and FKBP4 takes its place, thereby linking the complex to dynein and mediating transport to the nucleus, where the complex dissociates. Probably forms a complex composed of chaperones HSP90 and HSP70, co-chaperones CDC37, PPP5C, TSC1 and client protein TSC2, CDK4, AKT, RAF1 and NR3C1; this complex does not contain co-chaperones STIP1/HOP and PTGES3/p23. Directly interacts with UNC45A. Binds to DNA as a homodimer, and as heterodimer with NR3C2 or the retinoid X receptor. Binds STAT5A and STAT5B homodimers and heterodimers. Interacts with NRIP1, POU2F1, POU2F2 and TRIM28. Interacts with several coactivator complexes, including the SMARCA4 complex, CREBBP/EP300, TADA2L (Ada complex) and p160 coactivators such as NCOA2 and NCOA6. Interaction with BAG1 inhibits transactivation. Interacts with HEXIM1 and TGFB1I1. Interacts with NCOA1. Interacts with NCOA3, SMARCA4, SMARCC1, SMARCD1, and SMARCE1. Interacts with CLOCK, CRY1 and CRY2 in a ligand-dependent fashion. Interacts with CIART. Interacts with RWDD3. Interacts with UBE2I/UBC9 and this interaction is enhanced in the presence of RWDD3. Interacts with GRIP1. Interacts with NR4A3 (via nuclear receptor DNA-binding domain), represses transcription activity of NR4A3 on the POMC promoter Nur response element (NurRE). Directly interacts with PNRC2 to attract and form a complex with UPF1 and DCP1A; the interaction leads to rapid mRNA degradation. Interacts with GSK3B. Interacts with FNIP1 and FNIP2. Interacts (via C-terminus) with HNRNPU (via C-terminus). Interacts with MCM3AP. Interacts (via domain NR LBD) with HSP90AA1 and HSP90AB1. In the absence of hormonal ligand, interacts with TACC1. Interacts (via NR LBD domain) with ZNF764 (via KRAB domain); the interaction regulates transcription factor activity of NR3C1 by directing its actions toward certain biologic pathways. In terms of processing, acetylation by CLOCK reduces its binding to glucocorticoid response elements and its transcriptional activity. Increased proteasome-mediated degradation in response to glucocorticoids. Post-translationally, phosphorylated in the absence of hormone; becomes hyperphosphorylated in the presence of glucocorticoid. The Ser-208, Ser-231 and Ser-410-phosphorylated forms are mainly cytoplasmic, and the Ser-216-phosphorylated form is nuclear. Phosphorylation at Ser-216 increases transcriptional activity. Phosphorylation at Ser-208, Ser-231 and Ser-410 decreases signaling capacity. Phosphorylation at Ser-410 may protect from glucocorticoid-induced apoptosis. Phosphorylation at Ser-208 and Ser-216 is not required in regulation of chromosome segregation. May be dephosphorylated by PPP5C, attenuates NR3C1 action. In terms of processing, ubiquitinated by UBR5, leading to its degradation: UBR5 specifically recognizes and binds ligand-bound NR3C1 when it is not associated with coactivators (NCOAs). In presence of NCOAs, the UBR5-degron is not accessible, preventing its ubiquitination and degradation. Sumoylation at Lys-282 and Lys-298 negatively regulates its transcriptional activity. Sumoylation at Lys-708 positively regulates its transcriptional activity in the presence of RWDD3. Sumoylation at Lys-282 and Lys-298 is dispensable whereas sumoylation at Lys-708 is critical for the stimulatory effect of RWDD3 on its transcriptional activity. Heat shock increases sumoylation in a RWDD3-dependent manner.

It localises to the cytoplasm. The protein resides in the nucleus. The protein localises to the mitochondrion. Its subcellular location is the cytoskeleton. It is found in the spindle. It localises to the microtubule organizing center. The protein resides in the centrosome. The protein localises to the chromosome. Its subcellular location is the nucleoplasm. In terms of biological role, receptor for glucocorticoids (GC). Has a dual mode of action: as a transcription factor that binds to glucocorticoid response elements (GRE), both for nuclear and mitochondrial DNA, and as a modulator of other transcription factors. Affects inflammatory responses, cellular proliferation and differentiation in target tissues. Involved in chromatin remodeling. Plays a role in rapid mRNA degradation by binding to the 5' UTR of target mRNAs and interacting with PNRC2 in a ligand-dependent manner which recruits the RNA helicase UPF1 and the mRNA-decapping enzyme DCP1A, leading to RNA decay. Could act as a coactivator for STAT5-dependent transcription upon growth hormone (GH) stimulation and could reveal an essential role of hepatic GR in the control of body growth. Mediates glucocorticoid-induced apoptosis. Promotes accurate chromosome segregation during mitosis. May act as a tumor suppressor. May play a negative role in adipogenesis through the regulation of lipolytic and antilipogenic gene expression. This chain is Glucocorticoid receptor (NR3C1), found in Sus scrofa (Pig).